A 29-amino-acid chain; its full sequence is uncharacterized protein (29 aa).

The chain crosses the membrane as a helical span at residues 7–27 (FSLVTTIIVLGLIVAVGLTAA).

It is found in the cell inner membrane. This is an uncharacterized protein from Escherichia coli O6:K15:H31 (strain 536 / UPEC).